Here is an 822-residue protein sequence, read N- to C-terminus: Valine--tRNA ligase (822 aa).

The 'HIGH' region motif lies at 41 to 51 (PNVTGQLHLGH). The short motif at 511–515 (KMSKS) is the 'KMSKS' region element. Lys514 contacts ATP. Residues 765 to 822 (EQKGRELKEIQFLKSEILRAEKILTNKGFLEKAPREKIDLERTKLEKLKEKLAFYEKK) are a coiled coil.

The protein belongs to the class-I aminoacyl-tRNA synthetase family. ValS type 1 subfamily. Monomer.

The protein resides in the cytoplasm. It carries out the reaction tRNA(Val) + L-valine + ATP = L-valyl-tRNA(Val) + AMP + diphosphate. In terms of biological role, catalyzes the attachment of valine to tRNA(Val). As ValRS can inadvertently accommodate and process structurally similar amino acids such as threonine, to avoid such errors, it has a 'posttransfer' editing activity that hydrolyzes mischarged Thr-tRNA(Val) in a tRNA-dependent manner. In Mesomycoplasma hyopneumoniae (strain 7448) (Mycoplasma hyopneumoniae), this protein is Valine--tRNA ligase.